We begin with the raw amino-acid sequence, 632 residues long: MCGFVGVFNKHPLAQTADQEELIKQMNQMIVHRGPDSDGYFHDEHVGFGFRRLSIIDVENGGQPLSYEDETYWIIFNGEIYNYIELREELEAKGYTFNTDSDTEVLLATYRHYKEEAASKLRGMFAFLIWNKNDHVLYGARDPFGIKPLYYTTINDQVYFASERKSLMVAQNDIEIDKEALQQYMSFQFVPEPSTLDAHVKKVEPGSQFTIRPDGDITFKTYFKANFKPVQTEEDKLVKEVRDAIYDSVNVHMRSDVPVGSFLSGGIDSSFIVSVAKEFHPSLKTFSVGFEQQGFSEVDVAKETAAALGIENISKVISPEEYMNELPKIVWHFDDPLADPAAIPLYFVAKEAKKHVTVALSGEGADELFGGYNIYREPLSLKPFERIPSGLKKMLLHVAAVMPEGMRGKSLLERGCTPLQDRYIGNAKIFEESVKKQLLKHYNPNLSYRDVTKTYFTESSSYSDINKMQYVDIHTWMRGDILLKADKMTMANSLELRVPFLDKVVFDVASKIPDELKTKNGTTKYLLRKAAEGIVPEHVLNRKKLGFPVPIRHWLKNEMNEWVRNIIQESQTDAYIHKDYVLQLLEDHCADKADNSRKIWTVLIFMIWHSINIEKRYMPEELSHQPKEVIFV.

Cys2 (for GATase activity) is an active-site residue. In terms of domain architecture, Glutamine amidotransferase type-2 spans 2–214; sequence CGFVGVFNKH…PGSQFTIRPD (213 aa). Residues 52–56, 77–79, and Asp102 each bind L-glutamine; these read RLSII and NGE. ATP-binding positions include Val288 and 361–362; that span reads SG.

It belongs to the asparagine synthetase family.

It carries out the reaction L-aspartate + L-glutamine + ATP + H2O = L-asparagine + L-glutamate + AMP + diphosphate + H(+). It participates in amino-acid biosynthesis; L-asparagine biosynthesis; L-asparagine from L-aspartate (L-Gln route): step 1/1. Functionally, main asparagine synthetase in vegetative cells. This is Asparagine synthetase [glutamine-hydrolyzing] 1 (asnB) from Bacillus subtilis (strain 168).